The primary structure comprises 177 residues: Thymidine kinase (177 aa).

11–18 (GPMFSGKS) serves as a coordination point for ATP. The active-site Proton acceptor is glutamate 83. Phenylalanine 113 contacts substrate. Cysteine 138 and cysteine 141 together coordinate Zn(2+). Residue 157 to 161 (IEIIG) coordinates substrate. The Zn(2+) site is built by cysteine 170 and cysteine 173.

It belongs to the thymidine kinase family. In terms of assembly, homotetramer. Two molecules of substrate bind to each enzyme tetramer.

It catalyses the reaction thymidine + ATP = dTMP + ADP + H(+). Functionally, phosphorylates thymidine and thymidine analogs, such as azidothymidine (AZT). Part of the salvage pathway for pyrimidine deoxyribonucleotide synthesis. This Variola virus (isolate Human/India/Ind3/1967) (VARV) protein is Thymidine kinase (OPG101).